The sequence spans 469 residues: Argininosuccinate lyase (469 aa).

It belongs to the lyase 1 family. Argininosuccinate lyase subfamily.

It localises to the cytoplasm. The enzyme catalyses 2-(N(omega)-L-arginino)succinate = fumarate + L-arginine. It functions in the pathway amino-acid biosynthesis; L-arginine biosynthesis; L-arginine from L-ornithine and carbamoyl phosphate: step 3/3. This is Argininosuccinate lyase from Burkholderia orbicola (strain MC0-3).